Consider the following 105-residue polypeptide: Intracellular chorismate mutase (105 aa).

The Chorismate mutase domain occupies 23-105 (SQPVPEIDTL…LRLGRGRLGH (83 aa)). Arg61, Val70, and Glu74 together coordinate chorismate.

Homodimer. Interacts with AroG.

Its subcellular location is the cytoplasm. The catalysed reaction is chorismate = prephenate. It functions in the pathway metabolic intermediate biosynthesis; prephenate biosynthesis; prephenate from chorismate: step 1/1. With respect to regulation, the formation of the complex with AroG activates the chorismate mutase activity. In terms of biological role, catalyzes the Claisen rearrangement of chorismate to prephenate. Probably involved in the aromatic amino acid biosynthesis. The chain is Intracellular chorismate mutase from Mycobacterium bovis (strain ATCC BAA-935 / AF2122/97).